A 121-amino-acid polypeptide reads, in one-letter code: Large ribosomal subunit protein eL18 (121 aa).

Belongs to the eukaryotic ribosomal protein eL18 family. As to quaternary structure, part of the 50S ribosomal subunit.

The polypeptide is Large ribosomal subunit protein eL18 (Thermococcus kodakarensis (strain ATCC BAA-918 / JCM 12380 / KOD1) (Pyrococcus kodakaraensis (strain KOD1))).